The chain runs to 473 residues: Hyaluronidase-2 (473 aa).

Positions 1–20 (MWTGLGPAVTLALVLVVAWA) are cleaved as a signal peptide. Disulfide bonds link Cys-47–Cys-343 and Cys-214–Cys-230. Residues Asn-77 and Asn-106 are each glycosylated (N-linked (GlcNAc...) asparagine). Catalysis depends on Glu-138, which acts as the Proton donor. N-linked (GlcNAc...) asparagine glycans are attached at residues Asn-340 and Asn-360. The 79-residue stretch at 364–442 (AAQYCSWAQC…YLGWGGEQCQ (79 aa)) folds into the EGF-like domain. 3 cysteine pairs are disulfide-bonded: Cys-368–Cys-379, Cys-373–Cys-430, and Cys-432–Cys-441. Gly-451 is lipidated: GPI-anchor amidated glycine. The propeptide at 452–473 (ASGAWAGSHLTGLLAVAVLAFT) is removed in mature form.

It belongs to the glycosyl hydrolase 56 family. In terms of assembly, interacts with MST1R.

It is found in the cell membrane. The enzyme catalyses Random hydrolysis of (1-&gt;4)-linkages between N-acetyl-beta-D-glucosamine and D-glucuronate residues in hyaluronate.. Catalyzes hyaluronan degradation into small fragments that are endocytosed and degraded in lysosomes by HYAL1 and exoglycosidases. Essential for the breakdown of extracellular matrix hyaluronan. The protein is Hyaluronidase-2 (HYAL2) of Bos taurus (Bovine).